A 440-amino-acid chain; its full sequence is tRNA(Ile)-lysidine synthase (440 aa).

Position 19–24 (19–24) interacts with ATP; the sequence is SGGLDS.

This sequence belongs to the tRNA(Ile)-lysidine synthase family.

It is found in the cytoplasm. The enzyme catalyses cytidine(34) in tRNA(Ile2) + L-lysine + ATP = lysidine(34) in tRNA(Ile2) + AMP + diphosphate + H(+). Ligates lysine onto the cytidine present at position 34 of the AUA codon-specific tRNA(Ile) that contains the anticodon CAU, in an ATP-dependent manner. Cytidine is converted to lysidine, thus changing the amino acid specificity of the tRNA from methionine to isoleucine. The sequence is that of tRNA(Ile)-lysidine synthase from Buchnera aphidicola subsp. Acyrthosiphon pisum (strain APS) (Acyrthosiphon pisum symbiotic bacterium).